We begin with the raw amino-acid sequence, 101 residues long: Apolipoprotein C-II (101 aa).

An N-terminal signal peptide occupies residues 1–17; it reads MGTRFLLALCLVLLVLG. The segment at 66–74 is lipid binding; it reads AVDEKLRDL. A lipoprotein lipase cofactor region spans residues 78–101; that stretch reads STAAMSTYTGIFTDQVLSVLKGEE.

It belongs to the apolipoprotein C2 family. Post-translationally, proapolipoprotein C-II is synthesized as a sialic acid containing glycoprotein which is subsequently desialylated prior to its proteolytic processing. In terms of processing, proapolipoprotein C-II, the major form found in plasma undergoes proteolytic cleavage of its N-terminal hexapeptide to generate apolipoprotein C-II, which occurs as the minor form in plasma.

It localises to the secreted. Functionally, component of chylomicrons, very low-density lipoproteins (VLDL), low-density lipoproteins (LDL), and high-density lipoproteins (HDL) in plasma. Plays an important role in lipoprotein metabolism as an activator of lipoprotein lipase. Both proapolipoprotein C-II and apolipoprotein C-II can activate lipoprotein lipase. In Chlorocebus sabaeus (Green monkey), this protein is Apolipoprotein C-II (APOC2).